We begin with the raw amino-acid sequence, 316 residues long: Acetyl-coenzyme A carboxylase carboxyl transferase subunit alpha (316 aa).

The region spanning 24–291 (NIKDKADIVD…KEALIQQLNE (268 aa)) is the CoA carboxyltransferase C-terminal domain.

It belongs to the AccA family. Acetyl-CoA carboxylase is a heterohexamer composed of biotin carboxyl carrier protein (AccB), biotin carboxylase (AccC) and two subunits each of ACCase subunit alpha (AccA) and ACCase subunit beta (AccD).

The protein resides in the cytoplasm. The enzyme catalyses N(6)-carboxybiotinyl-L-lysyl-[protein] + acetyl-CoA = N(6)-biotinyl-L-lysyl-[protein] + malonyl-CoA. It participates in lipid metabolism; malonyl-CoA biosynthesis; malonyl-CoA from acetyl-CoA: step 1/1. In terms of biological role, component of the acetyl coenzyme A carboxylase (ACC) complex. First, biotin carboxylase catalyzes the carboxylation of biotin on its carrier protein (BCCP) and then the CO(2) group is transferred by the carboxyltransferase to acetyl-CoA to form malonyl-CoA. The sequence is that of Acetyl-coenzyme A carboxylase carboxyl transferase subunit alpha from Ruthia magnifica subsp. Calyptogena magnifica.